Consider the following 172-residue polypeptide: Adenine phosphoribosyltransferase (172 aa).

The protein belongs to the purine/pyrimidine phosphoribosyltransferase family. Homodimer.

It is found in the cytoplasm. The catalysed reaction is AMP + diphosphate = 5-phospho-alpha-D-ribose 1-diphosphate + adenine. It functions in the pathway purine metabolism; AMP biosynthesis via salvage pathway; AMP from adenine: step 1/1. Catalyzes a salvage reaction resulting in the formation of AMP, that is energically less costly than de novo synthesis. This chain is Adenine phosphoribosyltransferase, found in Streptococcus uberis (strain ATCC BAA-854 / 0140J).